An 811-amino-acid chain; its full sequence is U-box domain-containing protein 43 (811 aa).

In terms of domain architecture, U-box spans 24-103 (NIYEAFICPL…EEWRARNDAL (80 aa)). ARM repeat units follow at residues 136 to 175 (RKIR…VVVE), 178 to 217 (EESK…ELSK), 220 to 261 (ALCE…NLER), 263 to 302 (EENV…VLAL), 303 to 342 (NNDV…NISS), 344 to 388 (EGSA…NIVN), 399 to 438 (GPHH…GLTS), 444 to 484 (INVV…NISP), and 489 to 528 (ELAN…LLAE).

It carries out the reaction S-ubiquitinyl-[E2 ubiquitin-conjugating enzyme]-L-cysteine + [acceptor protein]-L-lysine = [E2 ubiquitin-conjugating enzyme]-L-cysteine + N(6)-ubiquitinyl-[acceptor protein]-L-lysine.. The protein operates within protein modification; protein ubiquitination. Functionally, functions as an E3 ubiquitin ligase. The sequence is that of U-box domain-containing protein 43 (PUB43) from Arabidopsis thaliana (Mouse-ear cress).